A 431-amino-acid polypeptide reads, in one-letter code: tRNA(Ile)-lysidine synthase (431 aa).

25–30 (SGGPDS) serves as a coordination point for ATP.

This sequence belongs to the tRNA(Ile)-lysidine synthase family.

It is found in the cytoplasm. The enzyme catalyses cytidine(34) in tRNA(Ile2) + L-lysine + ATP = lysidine(34) in tRNA(Ile2) + AMP + diphosphate + H(+). Ligates lysine onto the cytidine present at position 34 of the AUA codon-specific tRNA(Ile) that contains the anticodon CAU, in an ATP-dependent manner. Cytidine is converted to lysidine, thus changing the amino acid specificity of the tRNA from methionine to isoleucine. The chain is tRNA(Ile)-lysidine synthase from Lactobacillus gasseri (strain ATCC 33323 / DSM 20243 / BCRC 14619 / CIP 102991 / JCM 1131 / KCTC 3163 / NCIMB 11718 / NCTC 13722 / AM63).